We begin with the raw amino-acid sequence, 222 residues long: Probable transaldolase (222 aa).

Lysine 91 serves as the catalytic Schiff-base intermediate with substrate.

Belongs to the transaldolase family. Type 3B subfamily.

It localises to the cytoplasm. It carries out the reaction D-sedoheptulose 7-phosphate + D-glyceraldehyde 3-phosphate = D-erythrose 4-phosphate + beta-D-fructose 6-phosphate. It functions in the pathway carbohydrate degradation; pentose phosphate pathway; D-glyceraldehyde 3-phosphate and beta-D-fructose 6-phosphate from D-ribose 5-phosphate and D-xylulose 5-phosphate (non-oxidative stage): step 2/3. In terms of biological role, transaldolase is important for the balance of metabolites in the pentose-phosphate pathway. This Chlorobaculum tepidum (strain ATCC 49652 / DSM 12025 / NBRC 103806 / TLS) (Chlorobium tepidum) protein is Probable transaldolase.